The sequence spans 371 residues: MANIDFSAEIRALRATYESIERVTDMEALREDIAELSERAGEPDLWDDPAAAQKITSRLSHRQSELERLTTLASRIDDLEVLVELGQDEGDADSMGEAAAELESIQKALKNLEVVTLLSGEYDEREAVVSIRAGAGGVDAADFAEMLMRMYLRWAERHGYPTTVMDTSYAEEAGLKSATFEVKAPYAFGTLSVEAGTHRLVRISPFDNQGRRQTSFAAVEVIPLIEQTDSIDIPDNEIRVDVFRSSGPGGQSVNTTDSAVRLTHIPTGVVVSMQNEKSQLQNRAAAMRVLQSRLLLLKKEQEDAEKKALAGDVKASWGDQMRSYVLNPYQMVKDLRTEHEVGNTSAVFDGEIDDFIDAGIRWRTDNRNAEK.

Gln251 carries the N5-methylglutamine modification.

This sequence belongs to the prokaryotic/mitochondrial release factor family. In terms of processing, methylated by PrmC. Methylation increases the termination efficiency of RF2.

The protein localises to the cytoplasm. In terms of biological role, peptide chain release factor 2 directs the termination of translation in response to the peptide chain termination codons UGA and UAA. The polypeptide is Peptide chain release factor 2 (Pseudarthrobacter chlorophenolicus (strain ATCC 700700 / DSM 12829 / CIP 107037 / JCM 12360 / KCTC 9906 / NCIMB 13794 / A6) (Arthrobacter chlorophenolicus)).